We begin with the raw amino-acid sequence, 1507 residues long: Protein similar (1507 aa).

Residues 1–85 (MVSLIDTIEA…KSRDAARCRR (85 aa)) are disordered. The segment covering 26-49 (SASSSSCSSSFSSSPPSSSVGSPS) has biased composition (low complexity). Residues 72 to 85 (KRKEKSRDAARCRR) are compositionally biased toward basic and acidic residues. Residues 72-125 (KRKEKSRDAARCRRSKETEIFMELSAALPLKTDDVNQLDKASVMRITIAFLKIR) enclose the bHLH domain. PAS domains are found at residues 167–240 (NGAE…LAQK) and 307–377 (PHPS…LSKG). The region spanning 381-422 (TSRYRFLGKYGGYCWILSQATIVYDKLKPQSVVCVNYVISNL) is the PAC domain. Disordered regions lie at residues 433 to 459 (QQTA…KAAD), 541 to 588 (HSPG…PPPT), 706 to 832 (TCST…CSPN), and 900 to 951 (YAGN…QAAV). Over residues 439-459 (EQKEQHHQAAETEKEPEKAAD) the composition is skewed to basic and acidic residues. Residues 548 to 559 (ITAQLLSGSSSG) show a composition bias toward polar residues. Residues 578–588 (SPAPPLTPPPT) are compositionally biased toward pro residues. The tract at residues 692-863 (TCLLPEDINS…IDDDMPLLTE (172 aa)) is ODD. Positions 706-717 (TCSTTASGQHYQ) are enriched in polar residues. Low complexity-rich tracts occupy residues 718-745 (SPSS…LSPL) and 754-777 (SNPS…QQQH). Residues 803–818 (DTSCSQHLHSPSITSK) show a composition bias toward polar residues. Composition is skewed to low complexity over residues 823–832 (SSLPSLCSPN), 907–918 (QQQQQQPQLQQQ), and 926–951 (SSPA…QAAV). A coiled-coil region spans residues 880-908 (KEIDAIQQQLQQLQQQHHQQYAGNTGYQQ). Coiled-coil stretches lie at residues 982–1054 (AEEC…YDVQ) and 1110–1162 (QLLQ…QLQQ). 3 disordered regions span residues 1204–1228 (PQQQ…VESK), 1251–1287 (KDPA…QSNS), and 1356–1460 (FGGS…KTSI). Residues 1413-1423 (SSTSNSTNQAE) show a composition bias toward polar residues.

As to quaternary structure, efficient DNA binding requires dimerization with another bHLH protein. Interacts with Vhl. In terms of tissue distribution, ubiquitously expressed in the embryo.

Its subcellular location is the cytoplasm. It is found in the nucleus. Its function is as follows. Functions as a transcriptional regulator of the adaptive response to hypoxia. Binds to core DNA sequence 5'-[AG]CGTG-3' within the hypoxia response element (HRE) of target gene promoters. In Drosophila melanogaster (Fruit fly), this protein is Protein similar (sima).